A 97-amino-acid polypeptide reads, in one-letter code: Coiled-coil domain-containing protein 167 (97 aa).

Residues 36–80 (LRKMELTEEGRKSLEKEKSSLSSRLSNYERELKSLRHENRKNMLL) adopt a coiled-coil conformation. The helical transmembrane segment at 78-95 (MLLSVAIFLLFAVGYYCW) threads the bilayer.

It localises to the membrane. This is Coiled-coil domain-containing protein 167 (ccdc167) from Xenopus tropicalis (Western clawed frog).